The chain runs to 122 residues: Large ribosomal subunit protein uL14 (122 aa).

Belongs to the universal ribosomal protein uL14 family. As to quaternary structure, part of the 50S ribosomal subunit. Forms a cluster with proteins L3 and L19. In the 70S ribosome, L14 and L19 interact and together make contacts with the 16S rRNA in bridges B5 and B8.

Binds to 23S rRNA. Forms part of two intersubunit bridges in the 70S ribosome. This Janthinobacterium sp. (strain Marseille) (Minibacterium massiliensis) protein is Large ribosomal subunit protein uL14.